The chain runs to 143 residues: Large ribosomal subunit protein uL13 (143 aa).

This sequence belongs to the universal ribosomal protein uL13 family. As to quaternary structure, part of the 50S ribosomal subunit.

Its function is as follows. This protein is one of the early assembly proteins of the 50S ribosomal subunit, although it is not seen to bind rRNA by itself. It is important during the early stages of 50S assembly. The polypeptide is Large ribosomal subunit protein uL13 (Thermoanaerobacter pseudethanolicus (strain ATCC 33223 / 39E) (Clostridium thermohydrosulfuricum)).